Reading from the N-terminus, the 491-residue chain is LETM1 domain-containing protein LETM2, mitochondrial (491 aa).

Residues Met-1–Thr-25 constitute a mitochondrion transit peptide. At Cys-26–Arg-177 the chain is on the mitochondrial intermembrane side. Positions Glu-94–Lys-109 are enriched in polar residues. The segment at Glu-94–Ile-115 is disordered. The chain crosses the membrane as a helical span at residues Leu-178 to Leu-198. The Mitochondrial matrix portion of the chain corresponds to Lys-199 to Ala-491. Residues Thr-208–Glu-235 are a coiled coil. One can recognise a Letm1 RBD domain in the interval Lys-221 to Asp-438. The tract at residues Gly-435–Ala-491 is disordered. Low complexity predominate over residues Ser-449–Pro-461. Polar residues predominate over residues Ile-465–Ala-491.

The protein resides in the mitochondrion inner membrane. In Homo sapiens (Human), this protein is LETM1 domain-containing protein LETM2, mitochondrial (LETM2).